A 149-amino-acid polypeptide reads, in one-letter code: UPF0178 protein CPF_2548 (149 aa).

This sequence belongs to the UPF0178 family.

The polypeptide is UPF0178 protein CPF_2548 (Clostridium perfringens (strain ATCC 13124 / DSM 756 / JCM 1290 / NCIMB 6125 / NCTC 8237 / Type A)).